A 360-amino-acid polypeptide reads, in one-letter code: Peptide chain release factor 1 (360 aa).

At Q237 the chain carries N5-methylglutamine.

Belongs to the prokaryotic/mitochondrial release factor family. Post-translationally, methylated by PrmC. Methylation increases the termination efficiency of RF1.

It is found in the cytoplasm. In terms of biological role, peptide chain release factor 1 directs the termination of translation in response to the peptide chain termination codons UAG and UAA. In Teredinibacter turnerae (strain ATCC 39867 / T7901), this protein is Peptide chain release factor 1.